Reading from the N-terminus, the 3305-residue chain is Microtubule-actin cross-linking factor 1, isoforms 6/7 (3305 aa).

7 disordered regions span residues 1-24, 108-140, 152-202, 239-272, 333-381, 941-1007, and 2865-2896; these read MGKPLSRPDCLRRNPTCLGKGEDE, VQKSAPVPPRRRPNAERKDNVNRRSWKSFMPPN, LSEV…KSVD, AAASGNTDEMQEHRFSSATWPRAMKSSSKGGFSE, EEWE…VAVS, EPAI…PEWS, and SVEPTHAPFMEKSRSGSRKSLNQPTPPPMPIL. The span at 120 to 129 shows a compositional bias: basic and acidic residues; it reads PNAERKDNVN. EF-hand domains follow at residues 2958 to 2993 and 2994 to 3029; these read HKKSRVMDFFRRIDKDQDGKITRQEFIDGILASKFP and TTKLEMTAVADIFDRDGDGYIDYYEFVAALHPNKDA. The Ca(2+) site is built by Asp2971, Asp2973, Asp2975, Lys2977, Glu2982, Asp3007, Asp3009, Asp3011, Tyr3013, and Glu3018. Residues 3034–3106 enclose the GAR domain; that stretch reads TDADKIEDEV…EFLVKNDPCR (73 aa). The segment at 3122–3305 is disordered; that stretch reads PEGASQGMTP…ASPRTPGPKR (184 aa). Over residues 3142–3176 the composition is skewed to low complexity; that stretch reads SSRAASPTRSSSSASQSNHSCTSMPSSPATPASGT. The span at 3193-3212 shows a compositional bias: polar residues; sequence FHSSRTSLAGDTSNSSSPAS. A compositionally biased stretch (low complexity) spans 3227–3241; sequence SRPGSRAGSRAGSRA. Residues 3256–3266 are compositionally biased toward polar residues; that stretch reads ETQSACSDTSE. Low complexity predominate over residues 3267 to 3278; sequence SSAAGGQGSSRR.

It is found in the cytoplasm. The protein resides in the cytoskeleton. The protein is Microtubule-actin cross-linking factor 1, isoforms 6/7 of Mus musculus (Mouse).